The primary structure comprises 140 residues: Large ribosomal subunit protein uL11 (140 aa).

This sequence belongs to the universal ribosomal protein uL11 family. As to quaternary structure, part of the ribosomal stalk of the 50S ribosomal subunit. Interacts with L10 and the large rRNA to form the base of the stalk. L10 forms an elongated spine to which L12 dimers bind in a sequential fashion forming a multimeric L10(L12)X complex. In terms of processing, one or more lysine residues are methylated.

In terms of biological role, forms part of the ribosomal stalk which helps the ribosome interact with GTP-bound translation factors. The sequence is that of Large ribosomal subunit protein uL11 from Dehalococcoides mccartyi (strain CBDB1).